Consider the following 300-residue polypeptide: Tyrosine recombinase XerC (300 aa).

In terms of domain architecture, Core-binding (CB) spans Ile-2–Leu-88. One can recognise a Tyr recombinase domain in the interval Arg-109–Met-294. Residues Arg-150, Lys-174, His-246, Arg-249, and His-272 contribute to the active site. Tyr-281 functions as the O-(3'-phospho-DNA)-tyrosine intermediate in the catalytic mechanism.

Belongs to the 'phage' integrase family. XerC subfamily. As to quaternary structure, forms a cyclic heterotetrameric complex composed of two molecules of XerC and two molecules of XerD.

The protein resides in the cytoplasm. Functionally, site-specific tyrosine recombinase, which acts by catalyzing the cutting and rejoining of the recombining DNA molecules. The XerC-XerD complex is essential to convert dimers of the bacterial chromosome into monomers to permit their segregation at cell division. It also contributes to the segregational stability of plasmids. This is Tyrosine recombinase XerC from Listeria monocytogenes serotype 4b (strain F2365).